The sequence spans 439 residues: Xylose isomerase (439 aa).

Active-site residues include H99 and D102. Residues E230, E266, H269, D294, D305, D307, and D337 each contribute to the Mg(2+) site.

Belongs to the xylose isomerase family. Homotetramer. The cofactor is Mg(2+).

The protein resides in the cytoplasm. The catalysed reaction is alpha-D-xylose = alpha-D-xylulofuranose. The polypeptide is Xylose isomerase (Shouchella clausii (strain KSM-K16) (Alkalihalobacillus clausii)).